Reading from the N-terminus, the 153-residue chain is Calmodulin-like protein 4 (153 aa).

EF-hand domains follow at residues 8 to 43, 44 to 79, 81 to 116, and 117 to 152; these read DQIN…LGAS, PTPG…QIKQ, DPKK…LGEK, and LTHK…PVRD.

The protein belongs to the calmodulin family. In terms of assembly, interacts with MYO7B; the interaction mediates the association of CALML4 with the IMAC/intermicrovillar adhesion complex. Interacts with MYO7A. Expressed in the small intestine, in both mature enterocytes on the villus surface and immature cells that reside in the crypt stem-cell niche.

Its subcellular location is the cell projection. The protein resides in the microvillus. Functionally, as part of the intermicrovillar adhesion complex/IMAC plays a role in epithelial brush border differentiation, controlling microvilli organization and length. Acts as a light chain for MYO7B and is required for efficient targeting of the IMAC to the tips of border brush microvilli. This is Calmodulin-like protein 4 (Calml4) from Mus musculus (Mouse).